We begin with the raw amino-acid sequence, 662 residues long: Bifunctional polymyxin resistance protein ArnA (662 aa).

The tract at residues 1 to 307 (MTSKAVVFAY…ELGLVEGARL (307 aa)) is formyltransferase ArnAFT. His-106 functions as the Proton donor; for formyltransferase activity in the catalytic mechanism. Residues Arg-116 and 138–142 (IERAD) each bind (6R)-10-formyltetrahydrofolate. The segment at 316–662 (RRTRVLILGV…EALREREAQA (347 aa)) is dehydrogenase ArnADH. Residues Asp-349 and 370-371 (DI) contribute to the NAD(+) site. UDP-alpha-D-glucuronate is bound by residues Ala-395, Tyr-400, and 434 to 435 (TS). Glu-436 (proton acceptor; for decarboxylase activity) is an active-site residue. UDP-alpha-D-glucuronate-binding positions include Arg-462, Asn-493, 527–536 (RLVDGGAQKR), and Tyr-614. Arg-620 acts as the Proton donor; for decarboxylase activity in catalysis.

The protein in the N-terminal section; belongs to the Fmt family. UDP-L-Ara4N formyltransferase subfamily. In the C-terminal section; belongs to the NAD(P)-dependent epimerase/dehydratase family. UDP-glucuronic acid decarboxylase subfamily. Homohexamer, formed by a dimer of trimers.

The enzyme catalyses UDP-alpha-D-glucuronate + NAD(+) = UDP-beta-L-threo-pentopyranos-4-ulose + CO2 + NADH. It catalyses the reaction UDP-4-amino-4-deoxy-beta-L-arabinose + (6R)-10-formyltetrahydrofolate = UDP-4-deoxy-4-formamido-beta-L-arabinose + (6S)-5,6,7,8-tetrahydrofolate + H(+). Its pathway is nucleotide-sugar biosynthesis; UDP-4-deoxy-4-formamido-beta-L-arabinose biosynthesis; UDP-4-deoxy-4-formamido-beta-L-arabinose from UDP-alpha-D-glucuronate: step 1/3. It participates in nucleotide-sugar biosynthesis; UDP-4-deoxy-4-formamido-beta-L-arabinose biosynthesis; UDP-4-deoxy-4-formamido-beta-L-arabinose from UDP-alpha-D-glucuronate: step 3/3. The protein operates within bacterial outer membrane biogenesis; lipopolysaccharide biosynthesis. Its function is as follows. Bifunctional enzyme that catalyzes the oxidative decarboxylation of UDP-glucuronic acid (UDP-GlcUA) to UDP-4-keto-arabinose (UDP-Ara4O) and the addition of a formyl group to UDP-4-amino-4-deoxy-L-arabinose (UDP-L-Ara4N) to form UDP-L-4-formamido-arabinose (UDP-L-Ara4FN). The modified arabinose is attached to lipid A and is required for resistance to polymyxin and cationic antimicrobial peptides. This chain is Bifunctional polymyxin resistance protein ArnA, found in Pseudomonas aeruginosa (strain UCBPP-PA14).